The chain runs to 249 residues: MKPLHRWLPVVIGAALLIIFESRAAYAMHIMEGFLPPVWAGFWFIVVLPFWVLGLRRINRLIAGKPETRLLLGFAAAFAFVLSALKIPSVTGSSSHPTGTGLGTILFGPLVMSVLGSIVLLFQALLIAHGGLTTLGANAFSMAVVGPFVAWLIWKGLKDRAPIWLTVFLAAALADLFTYVVTSAQLALAYPDAVGGFAASFARFGAIFAVTQIPLAISEGILTVLIFNALQANAQTELQSLGVLKGAQA.

An N-terminal signal peptide occupies residues 1-27 (MKPLHRWLPVVIGAALLIIFESRAAYA). The next 6 helical transmembrane spans lie at 33–53 (GFLPPVWAGFWFIVVLPFWVL), 70–90 (LLLGFAAAFAFVLSALKIPSV), 102–122 (LGTILFGPLVMSVLGSIVLLF), 134–154 (TLGANAFSMAVVGPFVAWLIW), 161–181 (APIWLTVFLAAALADLFTYVV), and 207–227 (IFAVTQIPLAISEGILTVLIF).

It belongs to the CbiM family. In terms of assembly, forms an energy-coupling factor (ECF) transporter complex composed of an ATP-binding protein (A component, CbiO), a transmembrane protein (T component, CbiQ) and 2 possible substrate-capture proteins (S components, CbiM and CbiN) of unknown stoichimetry.

The protein resides in the cell membrane. Its pathway is cofactor biosynthesis; adenosylcobalamin biosynthesis. Its function is as follows. Part of the energy-coupling factor (ECF) transporter complex CbiMNOQ involved in cobalt import. This is Cobalt transport protein CbiM from Roseiflexus sp. (strain RS-1).